A 514-amino-acid polypeptide reads, in one-letter code: Cytochrome P450 monooxygenase MO6277 (514 aa).

A helical membrane pass occupies residues 6–26 (LTVLALLGGTLLLYCSGLVIY). A heme-binding site is contributed by Cys-457.

Belongs to the cytochrome P450 family. Heme serves as cofactor.

The protein resides in the membrane. The enzyme catalyses polyporic acid + reduced [NADPH--hemoprotein reductase] + O2 = ascocorynin + oxidized [NADPH--hemoprotein reductase] + H2O + H(+). It functions in the pathway secondary metabolite biosynthesis. Functionally, cytochrome P450 monooxygenase that hydroxylates polyporic acid produced by the nonribosomal peptide synthetase acyN to produce the less toxic metabolite ascocorynin. The hydrophobic substrate polyporic acid might approach the active site from the membrane and, after hydroxylation into ascocorynin, leaves into the cytoplasm. MO6277 appears vital to avoid high-level accumulation of polyporic acid in the fungal membrane. The chain is Cytochrome P450 monooxygenase MO6277 from Ascocoryne sarcoides (Purple jellydisc fungus).